Reading from the N-terminus, the 276-residue chain is Large ribosomal subunit protein uL2 (276 aa).

The tract at residues 225–276 (VMNPVDHPHGGGEGKTAAGRDPVSPWGTPTKGYRTRSNKRTDSMIVQKRHKR) is disordered.

This sequence belongs to the universal ribosomal protein uL2 family. Part of the 50S ribosomal subunit. Forms a bridge to the 30S subunit in the 70S ribosome.

Functionally, one of the primary rRNA binding proteins. Required for association of the 30S and 50S subunits to form the 70S ribosome, for tRNA binding and peptide bond formation. It has been suggested to have peptidyltransferase activity; this is somewhat controversial. Makes several contacts with the 16S rRNA in the 70S ribosome. This is Large ribosomal subunit protein uL2 from Cupriavidus taiwanensis (strain DSM 17343 / BCRC 17206 / CCUG 44338 / CIP 107171 / LMG 19424 / R1) (Ralstonia taiwanensis (strain LMG 19424)).